The chain runs to 102 residues: NADH-quinone oxidoreductase subunit K 2 (102 aa).

The next 3 membrane-spanning stretches (helical) occupy residues 6 to 26, 30 to 50, and 66 to 86; these read LEAF…GIIA, LVTV…ALVG, and FIIA…IAIF.

This sequence belongs to the complex I subunit 4L family. In terms of assembly, NDH-1 is composed of 14 different subunits. Subunits NuoA, H, J, K, L, M, N constitute the membrane sector of the complex.

The protein localises to the cell inner membrane. The catalysed reaction is a quinone + NADH + 5 H(+)(in) = a quinol + NAD(+) + 4 H(+)(out). In terms of biological role, NDH-1 shuttles electrons from NADH, via FMN and iron-sulfur (Fe-S) centers, to quinones in the respiratory chain. The immediate electron acceptor for the enzyme in this species is believed to be ubiquinone. Couples the redox reaction to proton translocation (for every two electrons transferred, four hydrogen ions are translocated across the cytoplasmic membrane), and thus conserves the redox energy in a proton gradient. The sequence is that of NADH-quinone oxidoreductase subunit K 2 from Aquifex aeolicus (strain VF5).